We begin with the raw amino-acid sequence, 187 residues long: Peptidyl-tRNA hydrolase (187 aa).

Residue Tyr-15 participates in tRNA binding. The active-site Proton acceptor is His-20. TRNA-binding residues include Phe-65, Asn-67, and Asn-113.

It belongs to the PTH family. As to quaternary structure, monomer.

It localises to the cytoplasm. The enzyme catalyses an N-acyl-L-alpha-aminoacyl-tRNA + H2O = an N-acyl-L-amino acid + a tRNA + H(+). Hydrolyzes ribosome-free peptidyl-tRNAs (with 1 or more amino acids incorporated), which drop off the ribosome during protein synthesis, or as a result of ribosome stalling. In terms of biological role, catalyzes the release of premature peptidyl moieties from peptidyl-tRNA molecules trapped in stalled 50S ribosomal subunits, and thus maintains levels of free tRNAs and 50S ribosomes. The protein is Peptidyl-tRNA hydrolase of Methylococcus capsulatus (strain ATCC 33009 / NCIMB 11132 / Bath).